The primary structure comprises 105 residues: Wound-induced protein 1 (105 aa).

To potato anionic peroxidase. Ubiquitous.

The polypeptide is Wound-induced protein 1 (WUN1) (Solanum tuberosum (Potato)).